The sequence spans 109 residues: Flowering-promoting factor 1-like protein 1 (109 aa).

The D-box signature appears at 73–81 (RGSLDLISL).

Belongs to the FPF1 family. In terms of assembly, interacts with RPT4. Post-translationally, ubiquitinated. RPT4 mediates its proteasome-dependent degradation. Specifically expressed in the apical meristem, the elongation zone of root tip, steles of the branch zone, and the young lateral root. Also expressed in spikes. Expressed in roots and spikes (at protein level).

It is found in the cytoplasm. The protein resides in the nucleus. In terms of biological role, GTP-binding protein that functions in the development of root systems, which are mediated by auxin. Acts as a cell cycle regulator during root development. Proteasome-mediated degradation of the protein is necessary for the transition of metaphase to anaphase in mitosis. In Oryza sativa subsp. japonica (Rice), this protein is Flowering-promoting factor 1-like protein 1 (RAA1).